Reading from the N-terminus, the 327-residue chain is Ribosomal RNA small subunit methyltransferase H (327 aa).

Residues 37-39, Asp-55, Phe-82, Asp-99, and Gln-106 each bind S-adenosyl-L-methionine; that span reads GGY. The interval 303–327 is disordered; sequence IATRTDAPAQPVAPETLGLPQLEGF.

Belongs to the methyltransferase superfamily. RsmH family.

It localises to the cytoplasm. The catalysed reaction is cytidine(1402) in 16S rRNA + S-adenosyl-L-methionine = N(4)-methylcytidine(1402) in 16S rRNA + S-adenosyl-L-homocysteine + H(+). Its function is as follows. Specifically methylates the N4 position of cytidine in position 1402 (C1402) of 16S rRNA. The chain is Ribosomal RNA small subunit methyltransferase H from Jannaschia sp. (strain CCS1).